Consider the following 174-residue polypeptide: Dual-action ribosomal maturation protein DarP (174 aa).

The protein belongs to the DarP family.

The protein resides in the cytoplasm. In terms of biological role, member of a network of 50S ribosomal subunit biogenesis factors which assembles along the 30S-50S interface, preventing incorrect 23S rRNA structures from forming. Promotes peptidyl transferase center (PTC) maturation. This is Dual-action ribosomal maturation protein DarP from Pseudomonas aeruginosa (strain LESB58).